The chain runs to 240 residues: Protein OPG176 (240 aa).

This sequence belongs to the orthopoxvirus OPG176 family. As to quaternary structure, tetramer. Interacts with host MYD88, TRF4, TICAM2 and MAL.

BCL2-like protein which disrupts the host immune response by inhibiting the TLR4 signaling pathway leading to NF-kappa-B activation. Acts close to the plasma membrane and targets several host TIR-domain containing adapter proteins including MYD88, TIRAP, TRIF and TICAM2. In turn, blocks the host NF-kappa-B and TRIF-mediated IRF3 activation. This is Protein OPG176 (OPG176) from Cynomys gunnisoni (Gunnison's prairie dog).